The chain runs to 122 residues: Large ribosomal subunit protein uL14 (122 aa).

It belongs to the universal ribosomal protein uL14 family. In terms of assembly, part of the 50S ribosomal subunit. Forms a cluster with proteins L3 and L19. In the 70S ribosome, L14 and L19 interact and together make contacts with the 16S rRNA in bridges B5 and B8.

In terms of biological role, binds to 23S rRNA. Forms part of two intersubunit bridges in the 70S ribosome. The sequence is that of Large ribosomal subunit protein uL14 from Geobacillus sp. (strain WCH70).